We begin with the raw amino-acid sequence, 102 residues long: Co-chaperonin GroES (102 aa).

Belongs to the GroES chaperonin family. In terms of assembly, heptamer of 7 subunits arranged in a ring. Interacts with the chaperonin GroEL.

Its subcellular location is the cytoplasm. Its function is as follows. Together with the chaperonin GroEL, plays an essential role in assisting protein folding. The GroEL-GroES system forms a nano-cage that allows encapsulation of the non-native substrate proteins and provides a physical environment optimized to promote and accelerate protein folding. GroES binds to the apical surface of the GroEL ring, thereby capping the opening of the GroEL channel. The sequence is that of Co-chaperonin GroES from Chlamydia trachomatis serovar D (strain ATCC VR-885 / DSM 19411 / UW-3/Cx).